Reading from the N-terminus, the 3960-residue chain is MSGILDRCTCTPNARVFMAEGQVYCTRCLSARSLLPLNLQVSELGVLGLFYRPEEPLRWTLPRAFPTVECSPAGACWLSAIFPIARMTSGNLNFQQRMVRVAAELYRAGQLTPAVLKALQVYERGCRWYPIVGPVPGVAVFANSLHVSDKPFPGATHVLTNLPLPQRPKPEDFCPFECAMATVYDIGHDAVMYVAERKVSWAPRGGDEVKFEAVPGELKLIANRLRTSFPPHHTVDMSKFAFTAPGCGVSMRVERQHGCLPADTVPEGNCWWSLFDLLPLEVQNKEIRHANQFGYQTKHGVSGKYLQRRLQVNGLRAVTDLNGPIVVQYFSVKESWIRHLKLAGEPSYSGFEDLLRIRVEPNTSPLADKEEKIFRFGSHKWYGAGKRARKARSCATATVAGRALSVRETRQAKEHEVAGANKAEHLKHYSPPAEGNCGWHCISAIANRMVNSKFETTLPERVRPPDDWATDEDLVNAIQILRLPAALDRNGACTSAKYVLKLEGEHWTVTVTPGMSPSLLPLECVQGCCGHKGGLGSPDAVEVSGFDPACLDRLAEVMHLPSSAIPAALAEMSGDSDRSASPVTTVWTVSQFFARHSGGNHPDQVRLGKIISLCQVIEDCCCSQNKTNRVTPEEVAAKIDLYLRGATNLEECLARLEKARPPRVIDTSFDWDVVLPGVEAATQTIKLPQVNQCRALVPVVTQKSLDNNSVPLTAFSLANYYYRAQGDEVRHRERLTAVLSKLEKVVREEYGLMPTEPGPRPTLPRGLDELKDQMEEDLLKLANAQTTSDMMAWAVEQVDLKTWVKNYPRWTPPPPPPKVQPRKTKPVKSLPERKPVPAPRRKVGSDCGSPVSLGGDVPNSWEDLAVSSPFDLPTPPEPATPSSELVIVSSPQCIFRPATPLSEPAPIPAPRGTVSRPVTPLSEPIPVPAPRRKFQQVKRLSSAAAIPPYQDEPLDLSASSQTEYEASPPAPPQSGGVLGVEGHEAEETLSEISDMSGNIKPASVSSSSSLSSVRITRPKYSAQAIIDSGGPCSGHLQEVKETCLSVMREACDATKLDDPATQEWLSRMWDRVDMLTWRNTSVYQAICTLDGRLKFLPKMILETPPPYPCEFVMMPHTPAPSVGAESDLTIGSVATEDVPRILEKIENVGEMANQGPLAFSEDKPVDDQLVNDPRISSRRPDESTSAPSAGTGGAGSFTDLPPSDGADADGGGPFRTVKRKAERLFDQLSRQVFDLVSHLPVFFSRLFYPGGGYSPGDWGFAAFTLLCLFLCYSYPAFGIAPLLGVFSGSSRRVRMGVFGCWLAFAVGLFKPVSDPVGAACEFDSPECRNILHSFELLKPWDPVRSLVVGPVGLGLAILGRLLGGARCIWHFLLRLGIVADCILAGAYVLSQGRCKKCWGSCIRTAPNEVAFNVFPFTRATRSSLIDLCDRFCAPKGMDPIFLATGWRGCWAGRSPIEQPSEKPIAFAQLDEKKITARTVVAQPYDPNQAVKCLRVLQSGGAMVAKAVPKVVKVSAVPFRAPFFPTGVKVDPDCRVVVDPDTFTAALRSGYSTTNLVLGVGDFAQLNGLKIRQISKPSGGGPHLMAALHVACSMALHMLAGIYVTAVGSCGTGTNDPWCANPFAVPGYGPGSLCTSRLCISQHGLTLPLTALVAGFGIQEIALVVLIFVSIGGMAHRLSCKADMLCVLLAIASYVWVPLTWLLCVFPCWLRCFSLHPLTILWLVFFLISVNMPSGILAMVLLVSLWLLGRYTNVAGLVTPYDIHHYTSGPRGVAALATAPDGTYLAAVRRAALTGRTMLFTPSQLGSLLEGAFRTRKPSLNTVNVIGSSMGSGGVFTIDGKVKCVTAAHVLTGNSARVSGVGFNQMLDFDVKGDFAIADCPNWQGAAPKTQFCTDGWTGRAYWLTSSGVEPGVIGKGFAFCFTACGDSGSPVITEAGELVGVHTGSNKQGGGIVTRPSGQFCNVAPIKLSELSEFFAGPKVPLGDVKVGSHIIKDISEVPSDLCALLAAKPELEGGLSTVQLLCVFFLLWRMMGHAWTPLVAVSFFILNEVLPAVLVRSVFSFGMFVLSWLTPWSAQVLMIRLLTAALNRNRWSLAFFSLGAVTGFVADLAATQGHPLQAVMNLSTYAFLPRMMVVTSPVPVITCGVVHLLAIILYLFKYRGPHHILVGDGVFSAAFFLRYFAEGKLREGVSQSCGMNHESLTGALAMRLNDEDLDFLMKWTDFKCFVSASNMRNAAGQFIEAAYAKALRVELAQLVQVDKVRGTLAKLEAFADTVAPQLSPGDIVVALGHTPVGSIFDLKVGSTKHTLQAIETRVLAGSKMTVARVVDPTPTPPPAPVPIPLPPKVLENGPNAWGDEDRLNKKKRRRMEALGIYVMGGKKYQKFWDKNSGDVFYEEVHNNTDEWECLRVGDPADFDPEKGTLCGHVTIENKAYHVYTSPSGKKFLVPVNPENGRVQWEAAKLSVEQALGMMNVDGELTAKELEKLKRIIDKLQGLTKEQCLNCLAASDLTRCGRGGLVVTETAVKIVKFHNRTFTLGPVNLKVASEVELKDAVEHNQHPVARPIDGGVVLLRSAVPSLIDVLISGADASPKLLAHHGPGNTGIDGTLWDFESEATKEEVALSAQIIQACDIRRGDAPEIGLPYKLYPVRGNPERVKGVLQNTRFGDIPYKTPSDTGSPVHAAACLTPNATPVTDGRSVLATTMPPGFELYVPTIPASVLDYLDSRPDCPKQLTEHGCEDAALKDLSKYDLSTQGFVLPGVLRLVRKYLFAHVGKCPPVHRPSTYPAKNSMAGINGNRFPTKDIQSVPEIDVLCAQAVRENWQTVTPCTLKKQYCGKKKTRTILGTNNFIALAHRAVLSGVTQGFMKKAFNSPIALGKNKFKELQTPVLGRCLEADLASCDRSTPAIVRWFAANLLYELACAEEHLPSYVLNCCHDLLVTQSGAVTKRGGLSSGDPITSVSNTIYSLVIYAQHMVLSYFKSGHPHGLLFLQDQLKFEDMLKVQPLIVYSDDLVLYAESPTMPNYHWWVEHLNLMLGFQTDPKKTAITDSPSFLGCRIINGRQLVPNRDRILAALAYHMKASNVSEYYASAAAILMDSCACLEYDPEWFEELVVGIAQCARKDGYSFPGTPFFMSMWEKLRSNYEGKKSRVCGYCGAPAPYATACGLDVCIYHTHFHQHCPVTIWCGHPAGSGSCSECKSPVGKGTSPLDEVLEQVPYKPPRTVIMHVEQGLTPLDPGRYQTRRGLVSVRRGIRGNEVGLPDGDYASTALLPTCKEINMVAVASNVLRSRFIIGPPGAGKTYWLLQQVQDGDVIYTPTHQTMLDMIRALGTCRFNVPAGTTLQFPVPSRTGPWVRILAGGWCPGKNSFLDEAAYCNHLDVLRLLSKTTLTCLGDFKQLHPVGFDSHCYVFDIMPQTQLKTIWRFGQNICDAIQPDYRDKLMSMVNTTRVTYVEKPVRYGQVLTPYHRDREDDAITIDSSQGATFDVVTLHLPTKDSLNRQRALVAITRARHAIFVYDPHRQLQGLFDLPAKGTPVNLAVHCDGQLIVLDRNNKECTVAQALGNGDKFRATDKRVVDSLRAICADLEGSSSPLPKVAHNLGFYFSPDLTQFAKLPVELAPHWPVVSTQNNEKWPDRLVASLRPIHKYSRACIGAGYMVGPSVFLGTPGVVSYYLTKFVKGGAQVLPETVFSTGRIEVDCREYLDDREREVAASLPHGFIGDVKGTTVGGCHHVTSRYLPRVLPKESVAVVGVSSPGKAAKALCTLTDVYLPDLEAYLHPETQSKCWKMMLDFKEVRLMVWKDKTAYFQLEGRYFTWYQLASYASYIRVPVNSTVYLDPCMGPALCNRRVVGSTHWGADLAVTPYDYGAKIILSSAYHGEMPPGYKILACAEFSLDDPVKYKHTWGFESDTAYLYEFTGNGEDWEDYNDAFRARQEGKIYKATATSLKFYFPPGPVIEPTLGLN.

The C4-type; atypical zinc finger occupies 8–28 (CTCTPNARVFMAEGQVYCTRC). A Peptidase C31 domain is found at 69–180 (ECSPAGACWL…EDFCPFECAM (112 aa)). The interval 69-182 (ECSPAGACWL…FCPFECAMAT (114 aa)) is PCP1-alpha. Catalysis depends on for Nsp1-alpha papain-like cysteine proteinase activity residues Cys-76 and His-146. An important for host EIF2AK2 inhibition region spans residues 199–200 (VS). The tract at residues 263–382 (DTVPEGNCWW…IFRFGSHKWY (120 aa)) is PCP1-beta. The Peptidase C32 domain maps to 263-383 (DTVPEGNCWW…FRFGSHKWYG (121 aa)). Residues Cys-270 and His-339 each act as for Nsp1-beta papain-like cysteine proteinase activity in the active site. The OTU-like stretch occupies residues 426–513 (LKHYSPPAEG…GEHWTVTVTP (88 aa)). The Peptidase C33 domain maps to 428-535 (HYSPPAEGNC…QGCCGHKGGL (108 aa)). Catalysis depends on for Nsp2 cysteine proteinase activity residues Cys-437 and His-506. Disordered stretches follow at residues 809 to 882 (RWTP…ATPS), 899 to 979 (TPLS…GVLG), and 1156 to 1213 (PLAF…GGGP). Residues 810–819 (WTPPPPPPKV) are compositionally biased toward pro residues. A run of 8 helical transmembrane segments spans residues 1266-1286 (LCLFLCYSYPAFGIAPLLGVF), 1296-1316 (GVFGCWLAFAVGLFKPVSDPV), 1345-1365 (SLVVGPVGLGLAILGRLLGGA), 1368-1388 (IWHFLLRLGIVADCILAGAYV), 1583-1603 (LMAALHVACSMALHMLAGIYV), 1650-1670 (ALVAGFGIQEIALVVLIFVSI), 1685-1705 (CVLLAIASYVWVPLTWLLCVF), and 1719-1739 (ILWLVFFLISVNMPSGILAMV). The interval 1266–1388 (LCLFLCYSYP…ADCILAGAYV (123 aa)) is HD1. Positions 1583–1745 (LMAALHVACS…LAMVLLVSLW (163 aa)) are HD2. The Peptidase S32 domain occupies 1810–2013 (GAFRTRKPSL…ALLAAKPELE (204 aa)). Catalysis depends on charge relay system; for 3C-like serine proteinase activity residues His-1848, Asp-1873, and Ser-1927. 5 helical membrane-spanning segments follow: residues 2012–2032 (LEGGLSTVQLLCVFFLLWRMM), 2060–2080 (FSFGMFVLSWLTPWSAQVLMI), 2092–2112 (WSLAFFSLGAVTGFVADLAAT), 2137–2157 (SPVPVITCGVVHLLAIILYLF), and 2164–2184 (HILVGDGVFSAAFFLRYFAEG). The segment at 2036–2157 (WTPLVAVSFF…HLLAIILYLF (122 aa)) is HD3. Residues 2329–2358 (PTPTPPPAPVPIPLPPKVLENGPNAWGDED) are disordered. Residues 2330–2344 (TPTPPPAPVPIPLPP) show a composition bias toward pro residues. The NiRAN domain maps to 2488 to 2650 (IIDKLQGLTK…LPYKLYPVRG (163 aa)). The RdRp catalytic domain occupies 2889-3023 (GRCLEADLAS…YAESPTMPNY (135 aa)). The region spanning 3144 to 3207 (GKKSRVCGYC…SPVGKGTSPL (64 aa)) is the AV ZBD domain. Positions 3150, 3153, 3163, 3168, 3171, 3173, 3175, 3177, 3184, 3186, 3193, and 3196 each coordinate Zn(2+). Residues 3264 to 3416 (ASTALLPTCK…VFDIMPQTQL (153 aa)) enclose the (+)RNA virus helicase ATP-binding domain. 3292-3299 (GPPGAGKT) is an ATP binding site. Residues 3417-3545 (KTIWRFGQNI…AVHCDGQLIV (129 aa)) form the (+)RNA virus helicase C-terminal domain. One can recognise an AV-Nsp11N/CoV-Nsp15M domain in the interval 3584-3680 (EGSSSPLPKV…LTKFVKGGAQ (97 aa)). The NendoU domain maps to 3682 to 3804 (LPETVFSTGR…MVWKDKTAYF (123 aa)). Residues His-3713, His-3728, and Lys-3757 contribute to the active site.

It belongs to the arteriviridae polyprotein family. Nsp1-alpha papain-like: Interacts with host RNF31. In terms of assembly, interacts with host EIF2AK2; this interaction occurs in host stress granules and leads to EIF2AK2 inhibition. Interacts with host G3BP1; this interaction probably plays a role in Nsp1-beta-mediated inhibition of host EIF2AK2. As to quaternary structure, interacts with host DDX18; this interaction redistributes host DDX18 to the cytoplasm. Interacts with host IFITM1. In terms of assembly, interacts with host DDX5. As to quaternary structure, interacts with host OTULIN. Interacts with host LGALS3. Post-translationally, specific enzymatic cleavages in vivo by its own proteases yield mature proteins. Nsp1 is autocleaved into two subunits, Nsp1-alpha and Nsp1-beta. There are two alternative pathways for processing. Either nsp4-5 is cleaved, which represents the major pathway or the nsp5-6 and nsp6-7 are processed, which represents the minor pathway. The major pathway occurs when nsp2 acts as a cofactor for nsp4.

Its subcellular location is the host nucleus. It is found in the host cytoplasm. It localises to the host membrane. The protein localises to the host endoplasmic reticulum. The protein resides in the host perinuclear region. The catalysed reaction is RNA(n) + a ribonucleoside 5'-triphosphate = RNA(n+1) + diphosphate. The enzyme catalyses ATP + H2O = ADP + phosphate + H(+). It catalyses the reaction Thiol-dependent hydrolysis of ester, thioester, amide, peptide and isopeptide bonds formed by the C-terminal Gly of ubiquitin (a 76-residue protein attached to proteins as an intracellular targeting signal).. It carries out the reaction uridylyl-uridylyl-ribonucleotide-RNA = a 3'-end uridylyl-2',3'-cyclophospho-uridine-RNA + a 5'-end dephospho-ribonucleoside-RNA. In terms of biological role, contains the activities necessary for the transcription of negative stranded RNA, leader RNA, subgenomic mRNAs and progeny virion RNA as well as proteinases responsible for the cleavage of the polyprotein into functional products. Its function is as follows. Inhibits host IFN-beta production. Plays a role in the degradation of the host transcriptional activator CREBBP protein. The degradation of host CREBBP which is a key component of the IFN enhanceosome is likely responsible for the inhibition of interferon mediated by Nsp1-alpha. Also participates in the inhibition of host NF-kappa-B activation by counteracting LUBAC-dependent induction of NF-kappa-B. Reduces host NEMO ubiquitination by blocking the interaction between the two LUBAC complex components RNF31 and SHARPIN. Plays a role in blocking host mRNA nuclear export to the cytoplasm and subversion of host protein synthesis. Additionally, inhibits the interferon-activated JAK/STAT signal transduction by mediating the ubiquitination and subsequent proteasomal degradation of host KPNA1. Repurposes the host antiviral stress granules into a proviral platform to counteract the EIF2AK2/PKR restriction, thereby regulating the host inflammatory response. Functionally, multifunctional protein that acts as a viral protease and as a viral antagonist of host immune response. Cleaves the nsp2/nsp3 site in the viral polyprotein. Displays deubiquitinating activity that cleaves both ubiquitinated and ISGylated products and therefore inhibits ubiquitin and ISG15-dependent host innate immunity. Also deubiquinates host NFKBIA, thereby interfering with NFKBIA degradation and impairing subsequent NF-kappa-B activation. In terms of biological role, plays a role in the inhibition of the immune response by interacting with host IFITM1. This interaction leads to the proteasomal degradation of the IFN-induced antiviral protein IFITM1. Its function is as follows. Cleaves the majority of cleavage sites present in the C-terminus of the polyprotein. Triggers host apoptosis through caspase-3, -8, and -9 activations. Subverts host innate immune responses through its protease activity. Targets the NF-kappa-B essential modulator NEMO and mediates its cleavage. Blocks host interferon beta induction and downstream signaling by cleaving mitochondrial MAVS, dislodging it from the mitochondria. Impairs host defense by cleaving host mRNA-decapping enzyme DCP1A to attenuate its antiviral activity. Plays a role in the initial induction of autophagosomes from host endoplasmic reticulum. Functionally, plays a role in the inhibition of host STAT3 signaling pathway by inducing the degradation of STAT3. In terms of biological role, responsible for replication and transcription of the viral RNA genome. Its function is as follows. Displays RNA and DNA duplex-unwinding activities with 5' to 3' polarity. Plays a role in viral transcription/replication and prevents the simultaneous activation of host cell dsRNA sensors, such as MDA5/IFIH1, OAS, PKR and NLRP3 inflammasome. Acts by degrading the 5'-polyuridines generated during replication of the poly(A) region of viral genomic and subgenomic RNAs. Catalyzes a two-step reaction in which a 2'3'-cyclic phosphate (2'3'-cP) is first generated by 2'-O transesterification, which is then hydrolyzed to a 3'-phosphate (3'-P). If not degraded, poly(U) RNA would hybridize with poly(A) RNA tails and activate host dsRNA sensors. Also plays a role in the inhibition of host type I interferon production by recruiting host OTULIN to promote removal of linear ubiquitination targeting host NEMO. In Porcine reproductive and respiratory syndrome virus (strain VR-2332) (PRRSV), this protein is Replicase polyprotein 1ab (rep).